Consider the following 547-residue polypeptide: Sodium-coupled neutral amino acid transporter 4 (547 aa).

Topologically, residues 1–104 (MDPIELRSVN…GLSYAMANTG (104 aa)) are extracellular. Residue Ser-49 is modified to Phosphoserine. Residues 105–125 (IVLFVIMLLTVAILSLYSVHL) form a helical membrane-spanning segment. Residues 126–151 (LLKTAKEGGSLIYEKLGEKAFGWPGK) lie on the Cytoplasmic side of the membrane. A helical transmembrane segment spans residues 152–172 (IGAFISITMQNIGAMSSYLFI). The Extracellular portion of the chain corresponds to 173–195 (IKYELPEVIRVFMGLEENTGEWY). The chain crosses the membrane as a helical span at residues 196–216 (LNGNYLVLFVSVGIILPLSLL). Topologically, residues 217–220 (KNLG) are cytoplasmic. Residues 221–241 (YLGYTSGFSLTCMVFFVSVVI) form a helical membrane-spanning segment. Over 242-332 (YKKFQIPCPL…PKYFVFNSRT (91 aa)) the chain is Extracellular. A disulfide bridge links Cys-249 with Cys-321. Residues Asn-260, Asn-264, and Asn-276 are each glycosylated (N-linked (GlcNAc...) asparagine). A helical transmembrane segment spans residues 333–353 (AYAIPILAFAFVCHPEVLPIY). The Cytoplasmic segment spans residues 354–369 (SELKDRSRRKMQTVSN). A helical transmembrane segment spans residues 370 to 390 (ISITGMLVMYLLAALFGYLSF). At 391 to 411 (YGEVEDELLHAYSKVYTFDTA) the chain is on the extracellular side. The helical transmembrane segment at 412-432 (LLMVRLAVLVAVTLTVPIVLF) threads the bilayer. Over 433-453 (PIRTSVITLLFPRRPFSWVKH) the chain is Cytoplasmic. A helical transmembrane segment spans residues 454–474 (FGIAAIIIALNNVLVILVPTI). The Extracellular segment spans residues 475 to 476 (KY). A helical membrane pass occupies residues 477 to 497 (IFGFIGASSATMLIFILPAAF). Residues 498–514 (YLKLVKKEPLRSPQKIG) are Cytoplasmic-facing. Residues 515-535 (ALVFLVTGIIFMMGSMALIII) form a helical membrane-spanning segment. Residues 536-547 (DWIYNPPNPDHH) are Extracellular-facing.

This sequence belongs to the amino acid/polyamine transporter 2 family. The disulfide bond plays an important role in substrate transport, but has no effect on trafficking to the cell surface. As to expression, expressed predominantly in liver, and at lower level in skeletal muscle.

Its subcellular location is the cell membrane. It is found in the cell projection. The protein resides in the microvillus membrane. It catalyses the reaction L-alanine(in) + Na(+)(in) = L-alanine(out) + Na(+)(out). It carries out the reaction L-serine(in) + Na(+)(in) = L-serine(out) + Na(+)(out). The catalysed reaction is glycine(in) + Na(+)(in) = glycine(out) + Na(+)(out). The enzyme catalyses L-cysteine(in) + Na(+)(in) = L-cysteine(out) + Na(+)(out). It catalyses the reaction L-asparagine(in) + Na(+)(in) = L-asparagine(out) + Na(+)(out). It carries out the reaction L-threonine(in) + Na(+)(in) = L-threonine(out) + Na(+)(out). The catalysed reaction is L-proline(in) + Na(+)(in) = L-proline(out) + Na(+)(out). The enzyme catalyses L-methionine(in) + Na(+)(in) = L-methionine(out) + Na(+)(out). It catalyses the reaction L-glutamine(in) + Na(+)(in) = L-glutamine(out) + Na(+)(out). It carries out the reaction L-histidine(in) + Na(+)(in) = L-histidine(out) + Na(+)(out). In terms of biological role, symporter that cotransports neutral amino acids and sodium ions from the extraccellular to the intracellular side of the cell membrane. The transport is electrogenic, pH dependent and partially tolerates substitution of Na(+) by Li(+). Preferentially transports smaller amino acids, such as glycine, L-alanine, L-serine, L-asparagine and L-threonine, followed by L-cysteine, L-histidine, L-proline and L-glutamine and L-methionine. The polypeptide is Sodium-coupled neutral amino acid transporter 4 (Rattus norvegicus (Rat)).